A 144-amino-acid polypeptide reads, in one-letter code: Large ribosomal subunit protein uL15 (144 aa).

A compositionally biased stretch (basic residues) spans 1-13 (MVRERTKKLRGGH). Positions 1 to 32 (MVRERTKKLRGGHYGRGFKAGRGKGKKGGSGN) are disordered.

The protein belongs to the universal ribosomal protein uL15 family. As to quaternary structure, part of the 50S ribosomal subunit.

Binds to the 23S rRNA. The polypeptide is Large ribosomal subunit protein uL15 (Thermoplasma acidophilum (strain ATCC 25905 / DSM 1728 / JCM 9062 / NBRC 15155 / AMRC-C165)).